The sequence spans 576 residues: NADH-quinone oxidoreductase subunit C/D (576 aa).

Residues 1 to 176 form an NADH dehydrogenase I subunit C region; it reads MAWISLEKAK…NLEGLFNYDR (176 aa). The NADH dehydrogenase I subunit D stretch occupies residues 200 to 576; it reads SQIVLNWGPL…IDPVVGETDR (377 aa).

This sequence in the N-terminal section; belongs to the complex I 30 kDa subunit family. In the C-terminal section; belongs to the complex I 49 kDa subunit family. In terms of assembly, NDH-1 is composed of 13 different subunits. Subunits NuoB, CD, E, F, and G constitute the peripheral sector of the complex.

Its subcellular location is the cell inner membrane. The catalysed reaction is a quinone + NADH + 5 H(+)(in) = a quinol + NAD(+) + 4 H(+)(out). Functionally, NDH-1 shuttles electrons from NADH, via FMN and iron-sulfur (Fe-S) centers, to quinones in the respiratory chain. The immediate electron acceptor for the enzyme in this species is believed to be ubiquinone. Couples the redox reaction to proton translocation (for every two electrons transferred, four hydrogen ions are translocated across the cytoplasmic membrane), and thus conserves the redox energy in a proton gradient. The chain is NADH-quinone oxidoreductase subunit C/D from Sulfurihydrogenibium sp. (strain YO3AOP1).